The following is a 126-amino-acid chain: Fatty acid-binding protein, liver (126 aa).

Alanine 2 is modified (N-acetylalanine).

The protein belongs to the calycin superfamily. Fatty-acid binding protein (FABP) family.

It is found in the cytoplasm. Functionally, binds free fatty acids and their coenzyme A derivatives, bilirubin, and some other small molecules in the cytoplasm. May be involved in intracellular lipid transport. The protein is Fatty acid-binding protein, liver (fabp1) of Schroederichthys bivius (Narrowmouthed catshark).